We begin with the raw amino-acid sequence, 102 residues long: NADH-quinone oxidoreductase subunit K (102 aa).

A run of 3 helical transmembrane segments spans residues 6–26 (MEHGLALSGVLFSLGLIGLMV), 30–50 (ILFVLMSLEVMMNAAALAFVV), and 62–82 (IMFILVITLAAAEASIGLAIL).

The protein belongs to the complex I subunit 4L family. In terms of assembly, NDH-1 is composed of 13 different subunits. Subunits NuoA, H, J, K, L, M, N constitute the membrane sector of the complex.

It localises to the cell inner membrane. The catalysed reaction is a quinone + NADH + 5 H(+)(in) = a quinol + NAD(+) + 4 H(+)(out). Its function is as follows. NDH-1 shuttles electrons from NADH, via FMN and iron-sulfur (Fe-S) centers, to quinones in the respiratory chain. The immediate electron acceptor for the enzyme in this species is believed to be ubiquinone. Couples the redox reaction to proton translocation (for every two electrons transferred, four hydrogen ions are translocated across the cytoplasmic membrane), and thus conserves the redox energy in a proton gradient. The chain is NADH-quinone oxidoreductase subunit K from Azotobacter vinelandii (strain DJ / ATCC BAA-1303).